We begin with the raw amino-acid sequence, 208 residues long: MKFLLLLLLAPFISALRFDLKAESKPEQMCIRDFVSEGELVVINIDTDGSLNDGNVLNLYVHDSNGNEYRRLKNFVGEQRIAFTAPATTSFDVCFENTLDSNRGNRNAKRAIELDIESGSQARDWNKISATEKLRPIELELRKIEELTDEIVDELNYLKNREERLRNTNESTNERVRNFSVLVIIVLTSLGAWQVNYLKNYFKSKHII.

An N-terminal signal peptide occupies residues 1 to 15; it reads MKFLLLLLLAPFISA. The Lumenal segment spans residues 16–177; it reads LRFDLKAESK…TNESTNERVR (162 aa). In terms of domain architecture, GOLD spans 28–118; that stretch reads QMCIRDFVSE…KRAIELDIES (91 aa). A helical membrane pass occupies residues 178-198; it reads NFSVLVIIVLTSLGAWQVNYL. Topologically, residues 199–208 are cytoplasmic; that stretch reads KNYFKSKHII.

The protein belongs to the EMP24/GP25L family.

The protein localises to the endoplasmic reticulum membrane. It localises to the golgi apparatus membrane. Its function is as follows. Constituent of COPII-coated endoplasmic reticulum-derived transport vesicles. Required for efficient transport of a subset of secretory proteins to the Golgi. Facilitates retrograde transport from the Golgi to the endoplasmic reticulum. In Candida glabrata (strain ATCC 2001 / BCRC 20586 / JCM 3761 / NBRC 0622 / NRRL Y-65 / CBS 138) (Yeast), this protein is Endoplasmic reticulum vesicle protein 25 (ERV25).